The primary structure comprises 381 residues: Succinyl-diaminopimelate desuccinylase 1 (381 aa).

A Zn(2+)-binding site is contributed by His-70. Asp-72 is a catalytic residue. Asp-103 lines the Zn(2+) pocket. Glu-136 functions as the Proton acceptor in the catalytic mechanism. Glu-137, Glu-165, and His-354 together coordinate Zn(2+).

It belongs to the peptidase M20A family. DapE subfamily. Homodimer. The cofactor is Zn(2+). Co(2+) serves as cofactor.

It catalyses the reaction N-succinyl-(2S,6S)-2,6-diaminopimelate + H2O = (2S,6S)-2,6-diaminopimelate + succinate. The protein operates within amino-acid biosynthesis; L-lysine biosynthesis via DAP pathway; LL-2,6-diaminopimelate from (S)-tetrahydrodipicolinate (succinylase route): step 3/3. Catalyzes the hydrolysis of N-succinyl-L,L-diaminopimelic acid (SDAP), forming succinate and LL-2,6-diaminopimelate (DAP), an intermediate involved in the bacterial biosynthesis of lysine and meso-diaminopimelic acid, an essential component of bacterial cell walls. This chain is Succinyl-diaminopimelate desuccinylase 1, found in Ruegeria sp. (strain TM1040) (Silicibacter sp.).